Consider the following 183-residue polypeptide: uncharacterized protein (183 aa).

The tract at residues 54 to 89 (DAASQSDPLPGGDGLTGGDSKATRRTSPRYYPPSEA) is disordered.

This is an uncharacterized protein from Human cytomegalovirus (strain AD169) (HHV-5).